A 785-amino-acid chain; its full sequence is Proprotein convertase subtilisin/kexin type 7 (785 aa).

The N-terminal stretch at 1-37 (MPKGRQKVPHLDAPLGLPTCLWLELAGLFLLVPWVMG) is a signal peptide. The propeptide occupies 38-141 (LAGTGGPDGQ…EQRLLRRAKR (104 aa)). The Extracellular segment spans residues 142–667 (SVHFNDPKYP…YTITPNTLKT (526 aa)). Positions 153 to 473 (QWHLNNRRSP…FGLLNAWRLV (321 aa)) constitute a Peptidase S8 domain. N-linked (GlcNAc...) asparagine glycans are attached at residues asparagine 167 and asparagine 175. Aspartate 187 acts as the Charge relay system in catalysis. The segment at 197–219 (IAPNYSPEGSYDLNSNDPDPMPH) is disordered. The active-site Charge relay system is the histidine 228. An N-linked (GlcNAc...) asparagine glycan is attached at asparagine 241. Serine 406 acts as the Charge relay system in catalysis. One can recognise a P/Homo B domain in the interval 481 to 618 (SVPYLASYVS…QLTLYGSVWS (138 aa)). Residue asparagine 511 is glycosylated (N-linked (GlcNAc...) asparagine). Residues 668–688 (LVLVGCFTVFWTVYYMLEVYL) form a helical membrane-spanning segment. Over 689 to 785 (SQRNVASNQV…VPHGKEEQIC (97 aa)) the chain is Cytoplasmic. The disordered stretch occupies residues 700-751 (RSGPCHWPHRSRKAKEEGTELESVPLCSSKDPDEVETESRGPPTTSDLLAPD).

This sequence belongs to the peptidase S8 family. The cofactor is Ca(2+). Post-translationally, cysteine residues in the cytoplasmic tail are probably palmitoylated. In terms of processing, N-glycosylated. Expressed in spleen, thymus, prostate, testis, ovary, small intestine, colon and peripheral blood leukocyte.

It is found in the golgi apparatus. The protein localises to the trans-Golgi network membrane. Inhibited by zinc and copper. Its function is as follows. Serine endoprotease that processes various proproteins by cleavage at paired basic amino acids, recognizing the RXXX[KR]R consensus motif. Likely functions in the constitutive secretory pathway. In Homo sapiens (Human), this protein is Proprotein convertase subtilisin/kexin type 7 (PCSK7).